We begin with the raw amino-acid sequence, 300 residues long: MSYRELVVELAREHAEALSDALLELGALSVSVEDADADTPDEQPLFGEPGLVPDRTAWQHSRVVALLAADHEPAVLLAAAANEIGVAETPAFTVREVEEQDWVRLTQSQFEPIPIGERIWVVPSWHDAPDPDALILELDPGLAFGTGSHPTTRLCMEWLEQSVKPGQSVLDYGCGSGILAILAKKCGANPVIGIDIDPQAVESARQNSERNHADVTYGLPDACPDGEFDIVVANILSNPLKLMASMLASKVKPGGRIALSGVLARQADEVAAVYARYVDISVWREHEGWVCLAGTRRESH.

S-adenosyl-L-methionine contacts are provided by Thr-152, Gly-173, Asp-195, and Asn-234.

Belongs to the methyltransferase superfamily. PrmA family.

The protein localises to the cytoplasm. It carries out the reaction L-lysyl-[protein] + 3 S-adenosyl-L-methionine = N(6),N(6),N(6)-trimethyl-L-lysyl-[protein] + 3 S-adenosyl-L-homocysteine + 3 H(+). Functionally, methylates ribosomal protein L11. This is Ribosomal protein L11 methyltransferase from Burkholderia lata (strain ATCC 17760 / DSM 23089 / LMG 22485 / NCIMB 9086 / R18194 / 383).